The following is a 100-amino-acid chain: Putative antiporter subunit mnhF2 (100 aa).

3 helical membrane-spanning segments follow: residues Thr-6–Phe-26, Val-38–Ile-58, and Val-62–Ile-82.

The protein belongs to the CPA3 antiporters (TC 2.A.63) subunit F family. May form a heterooligomeric complex that consists of seven subunits: mnhA2, mnhB2, mnhC2, mnhD2, mnhE2, mnhF2 and mnhG2.

The protein localises to the cell membrane. The protein is Putative antiporter subunit mnhF2 (mnhF2) of Staphylococcus haemolyticus (strain JCSC1435).